Here is a 274-residue protein sequence, read N- to C-terminus: Type II restriction enzyme HgiEI (274 aa).

This sequence belongs to the TdeIII type II restriction endonuclease family.

It carries out the reaction Endonucleolytic cleavage of DNA to give specific double-stranded fragments with terminal 5'-phosphates.. Its function is as follows. A P subtype restriction enzyme that recognizes the double-stranded sequence 5'-GGWCC-3' and cleaves after G-1. This system is more active than isoschizomeric RM.HgiBI. This Herpetosiphon aurantiacus (Herpetosiphon giganteus) protein is Type II restriction enzyme HgiEI.